Here is a 319-residue protein sequence, read N- to C-terminus: MSLNFLDFEQPIAELEAKIDSLTAVSRQDEKLDINIDEEVHRLREKSVELTRKIFADLGAWQIAQLARHPQRPYTLDYVRLAFDEFDELAGDRAYADDKAIVGGIARLDGRPVMIIGHQKGRETKEKIRRNFGMPAPEGYRKALRLMQMAERFKMPIITFIDTPGAYPGVGAEERGQSEAIARNLREMSRLGVPVVCTVIGEGGSGGALAIGVGDKVNMLQYSTYSVISPEGCASILWKSADKAPLAAEAMGIIAPRLKELKLIDSIIPEPLGGAHRNPEAMAASLKAQLLTDLADLDVLSTEDLKNRRYQRLMSYGYA.

A CoA carboxyltransferase C-terminal domain is found at 35–296 (NIDEEVHRLR…KAQLLTDLAD (262 aa)).

Belongs to the AccA family. Acetyl-CoA carboxylase is a heterohexamer composed of biotin carboxyl carrier protein (AccB), biotin carboxylase (AccC) and two subunits each of ACCase subunit alpha (AccA) and ACCase subunit beta (AccD).

Its subcellular location is the cytoplasm. It catalyses the reaction N(6)-carboxybiotinyl-L-lysyl-[protein] + acetyl-CoA = N(6)-biotinyl-L-lysyl-[protein] + malonyl-CoA. It participates in lipid metabolism; malonyl-CoA biosynthesis; malonyl-CoA from acetyl-CoA: step 1/1. Functionally, component of the acetyl coenzyme A carboxylase (ACC) complex. First, biotin carboxylase catalyzes the carboxylation of biotin on its carrier protein (BCCP) and then the CO(2) group is transferred by the carboxyltransferase to acetyl-CoA to form malonyl-CoA. This is Acetyl-coenzyme A carboxylase carboxyl transferase subunit alpha from Escherichia coli O45:K1 (strain S88 / ExPEC).